An 835-amino-acid polypeptide reads, in one-letter code: Protein translocase subunit SecA 1 (835 aa).

ATP is bound by residues Q85, 103-107 (GEGKT), and D492. A disordered region spans residues 788 to 807 (VQGEAVHPSSDGEEAKKKPV). The Zn(2+) site is built by C819, C821, C830, and C831.

It belongs to the SecA family. Monomer and homodimer. Part of the essential Sec protein translocation apparatus which comprises SecA, SecYEG and auxiliary proteins SecDF. Other proteins may also be involved. The cofactor is Zn(2+).

The protein localises to the cell membrane. It localises to the cytoplasm. It carries out the reaction ATP + H2O + cellular proteinSide 1 = ADP + phosphate + cellular proteinSide 2.. Functionally, part of the Sec protein translocase complex. Interacts with the SecYEG preprotein conducting channel. Has a central role in coupling the hydrolysis of ATP to the transfer of proteins into and across the cell membrane, serving as an ATP-driven molecular motor driving the stepwise translocation of polypeptide chains across the membrane. The polypeptide is Protein translocase subunit SecA 1 (Bacillus thuringiensis subsp. konkukian (strain 97-27)).